The following is an 82-amino-acid chain: Sulfur carrier protein TusA (82 aa).

The active-site Cysteine persulfide intermediate is the C19.

This sequence belongs to the sulfur carrier protein TusA family.

The protein localises to the cytoplasm. Sulfur carrier protein which probably makes part of a sulfur-relay system. The chain is Sulfur carrier protein TusA from Photobacterium profundum (strain SS9).